Reading from the N-terminus, the 109-residue chain is Nucleoid-associated protein ASA_2087 (109 aa).

Disordered regions lie at residues 1-23 and 87-109; these read MFGK…RMQK and QSKS…KLPF. A compositionally biased stretch (low complexity) spans 11 to 23; that stretch reads MKQAQQMQERMQK.

The protein belongs to the YbaB/EbfC family. In terms of assembly, homodimer.

It localises to the cytoplasm. The protein localises to the nucleoid. Functionally, binds to DNA and alters its conformation. May be involved in regulation of gene expression, nucleoid organization and DNA protection. The polypeptide is Nucleoid-associated protein ASA_2087 (Aeromonas salmonicida (strain A449)).